A 26-amino-acid polypeptide reads, in one-letter code: Acyl carrier protein (26 aa).

One can recognise a Carrier domain in the interval S2 to E26.

This sequence belongs to the acyl carrier protein (ACP) family. 4'-phosphopantetheine is transferred from CoA to a specific serine of apo-ACP by AcpS. This modification is essential for activity because fatty acids are bound in thioester linkage to the sulfhydryl of the prosthetic group.

The protein localises to the cytoplasm. The protein operates within lipid metabolism; fatty acid biosynthesis. Its function is as follows. Carrier of the growing fatty acid chain in fatty acid biosynthesis. This Erythrobacter longus protein is Acyl carrier protein (acpP).